We begin with the raw amino-acid sequence, 3414 residues long: Genome polyprotein (3414 aa).

The disordered stretch occupies residues 1–30; sequence MVKKAILKGKGGGPPRRVSKETATKTRQPR. Topologically, residues 1-98 are cytoplasmic; sequence MVKKAILKGK…LQKRGKRRSA (98 aa). A propeptide spans 97–117 (ER anchor for the capsid protein C, removed in mature form by serine protease NS3); the sequence is SATDWMSWLLVITLLGMTIAA. The chain crosses the membrane as a helical span at residues 99-119; that stretch reads TDWMSWLLVITLLGMTIAATV. The Extracellular segment spans residues 120–242; the sequence is RKERDGSTVI…HLTRVEGWVW (123 aa). N-linked (GlcNAc...) asparagine; by host glycosylation occurs at asparagine 144. Residues 243-260 form a helical membrane-spanning segment; it reads KNRLLALAMVTVVWLTLE. Position 261 (serine 261) is a topological domain, cytoplasmic. The helical transmembrane segment at 262–280 threads the bilayer; sequence VVTRVAVLVVLLCLAPVYA. The Extracellular portion of the chain corresponds to 281–727; that stretch reads SRCTHLENRD…HTVLGGAFNS (447 aa). 6 cysteine pairs are disulfide-bonded: cysteine 283–cysteine 310, cysteine 340–cysteine 396, cysteine 340–cysteine 401, cysteine 354–cysteine 385, cysteine 372–cysteine 396, and cysteine 372–cysteine 401. A fusion peptide region spans residues 378–391; the sequence is DRGWGNHCGLFGKG. N-linked (GlcNAc...) asparagine; by host glycosylation occurs at asparagine 434. Disulfide bonds link cysteine 466/cysteine 570 and cysteine 587/cysteine 618. Residues 728 to 748 traverse the membrane as a helical segment; the sequence is IFGGVGFLPKLLLGVALAWLG. The Extracellular segment spans residues 749-755; that stretch reads LNMRNPT. A helical transmembrane segment spans residues 756–776; it reads MSMSFLLAGVLVLAMTLGVGA. Topologically, residues 777–1132 are extracellular; sequence DVGCAVDTER…RSMVVADNGE (356 aa). 6 disulfides stabilise this stretch: cysteine 780–cysteine 791, cysteine 831–cysteine 920, cysteine 955–cysteine 1000, cysteine 1057–cysteine 1106, cysteine 1068–cysteine 1090, and cysteine 1089–cysteine 1093. N-linked (GlcNAc...) asparagine; by host glycans are attached at residues asparagine 861, asparagine 983, and asparagine 999. The chain crosses the membrane as a helical span at residues 1133-1153; the sequence is LLSEGGVPGIVALFVVLEYII. Over 1154-1158 the chain is Cytoplasmic; that stretch reads RRRPS. Residues 1159–1179 form a helical membrane-spanning segment; sequence TGSTVVWGGIVVLALLVTGMV. Topologically, residues 1180 to 1187 are lumenal; the sequence is RMESLVRY. A helical transmembrane segment spans residues 1188–1208; it reads VVAVGITFHLELGPEIVALML. Residues 1209 to 1293 lie on the Cytoplasmic side of the membrane; sequence LQAVFELRVG…LLMALMTQQD (85 aa). The chain crosses the membrane as a helical span at residues 1294–1314; sequence VVTVHHGLVCFLSAASACSIW. Topologically, residues 1315–1327 are lumenal; sequence RLLRGHREQKGLT. The chain crosses the membrane as a helical span at residues 1328 to 1348; it reads WIVPLARLLGGEGSGIRLLAF. Residues 1349–1359 are Cytoplasmic-facing; sequence WELSAHRGRRS. The helical transmembrane segment at 1360–1377 threads the bilayer; it reads FSEPLTVVGVMLTLASGM. Residues 1378 to 1382 lie on the Lumenal side of the membrane; it reads MRHTS. Residues 1383-1403 traverse the membrane as a helical segment; it reads QEALCALAVASFLLLMLVLGT. The Cytoplasmic portion of the chain corresponds to 1404–1454; that stretch reads RKMQLVAEWSGCVEWHPELVNEGGEVSLRVRQDAMGNFHLTELEKEERMMA. Residues 1410 to 1449 are interacts with and activates NS3 protease; the sequence is AEWSGCVEWHPELVNEGGEVSLRVRQDAMGNFHLTELEKE. An intramembrane region (helical) is located at residues 1455–1475; sequence FWLIAGLAASAIHWSGIIGVM. Residues 1476-2160 are Cytoplasmic-facing; it reads GLWTLTKMLR…RMAERDAPEA (685 aa). Positions 1490-1669 constitute a Peptidase S7 domain; that stretch reads SDLVFSGQGG…EAEKSRPNLP (180 aa). Catalysis depends on charge relay system; for serine protease NS3 activity residues histidine 1543, aspartate 1567, and serine 1627. A Helicase ATP-binding domain is found at 1675 to 1831; it reads TGWTSKGQIT…ESNGAITSEE (157 aa). 1688 to 1695 is an ATP binding site; that stretch reads MHPGSGKT. A DEAH box motif is present at residues 1779 to 1782; the sequence is DEAH. A Helicase C-terminal domain is found at 1841–2000; it reads DGFDWITEYE…TLRGPVATFY (160 aa). Lysine 1883 is modified (N6-acetyllysine; by host). A helical membrane pass occupies residues 2161–2181; the sequence is FLTMVEMMVLGLATLGVIWCF. The Lumenal segment spans residues 2182–2189; it reads VVRTSISR. Residues 2190–2210 constitute an intramembrane region (helical); the sequence is MMLGTLVLLASLLLLWAGGVG. Residue tyrosine 2211 is a topological domain, lumenal. A helical transmembrane segment spans residues 2212 to 2232; that stretch reads GNMAGVALIFYTLLTVLQPEA. Over 2233–2244 the chain is Cytoplasmic; it reads GKQRSSDDNKLA. Residues 2245-2265 form a helical membrane-spanning segment; that stretch reads YFLLTLCSLAGLVAANEMGFL. At 2266 to 2299 the chain is on the lumenal side; that stretch reads EKTKADLSTVLWSEREEPRPWSEWTNVDIQPARS. Positions 2300-2320 form an intramembrane region, helical; sequence WGTYVLVVSLFTPYIIHQLQT. Residues 2321–2343 are Lumenal-facing; sequence KIQQLVNSAVASGAQAMRDLGGG. An intramembrane region (helical) is located at residues 2344–2364; the sequence is APFFGVAGHVMTLGVVSLIGA. Residues 2365–2368 lie on the Lumenal side of the membrane; the sequence is TPTS. A helical transmembrane segment spans residues 2369-2389; the sequence is LMVGVGLAALHLAIVVSGLEA. The Cytoplasmic portion of the chain corresponds to 2390-2432; that stretch reads ELTQRAHKVFFSAMVRNPMVDGDVINPFGEGEAKPALYERRMS. The chain crosses the membrane as a helical span at residues 2433–2453; the sequence is LVLAIVLCLMSVVMNRTVASI. The Lumenal portion of the chain corresponds to 2454-2477; sequence TEASAVGLAAAGQLLRPEADTLWT. Residues 2478–2498 traverse the membrane as a helical segment; the sequence is MPVACGMSGVVRGSLWGFLPL. The Cytoplasmic segment spans residues 2499-3414; sequence GHRLWLRASG…WELRLESSII (916 aa). Positions 2512-2776 constitute an mRNA cap 0-1 NS5-type MT domain; that stretch reads GGSEGDTLGD…ELDLGVGTRC (265 aa). Residue serine 2567 participates in S-adenosyl-L-methionine binding. The residue at position 2567 (serine 2567) is a Phosphoserine. The active-site For 2'-O-MTase activity is the lysine 2572. S-adenosyl-L-methionine-binding residues include glycine 2597, tryptophan 2598, threonine 2615, isoleucine 2616, aspartate 2642, and valine 2643. Residue aspartate 2657 is the For 2'-O-MTase activity of the active site. Position 2658 (isoleucine 2658) interacts with S-adenosyl-L-methionine. Active-site for 2'-O-MTase activity residues include lysine 2694 and glutamate 2730. The interval 2730 to 2734 is interaction with host SCRIB; sequence EMYYS. Tyrosine 2732 contributes to the S-adenosyl-L-methionine binding site. Glutamate 2950, histidine 2954, cysteine 2959, and cysteine 2962 together coordinate Zn(2+). In terms of domain architecture, RdRp catalytic spans 3040-3189; sequence GLFYADDTAG…RPLDDRFGKA (150 aa). Zn(2+) contacts are provided by histidine 3224, cysteine 3240, and cysteine 3359.

The protein in the N-terminal section; belongs to the class I-like SAM-binding methyltransferase superfamily. mRNA cap 0-1 NS5-type methyltransferase family. Homodimer. Interacts (via N-terminus) with host EXOC1 (via C-terminus); this interaction results in EXOC1 degradation through the proteasome degradation pathway. In terms of assembly, forms heterodimers with envelope protein E in the endoplasmic reticulum and Golgi. As to quaternary structure, homodimer; in the endoplasmic reticulum and Golgi. Interacts with protein prM. Interacts with non-structural protein 1. Homodimer; Homohexamer when secreted. Interacts with envelope protein E. In terms of assembly, interacts (via N-terminus) with serine protease NS3. As to quaternary structure, forms a heterodimer with serine protease NS3. May form homooligomers. Forms a heterodimer with NS2B. Interacts with NS4B. Interacts with unphosphorylated RNA-directed RNA polymerase NS5; this interaction stimulates RNA-directed RNA polymerase NS5 guanylyltransferase activity. In terms of assembly, interacts with serine protease NS3. As to quaternary structure, homodimer. Interacts with host STAT2; this interaction inhibits the phosphorylation of the latter, and, when all viral proteins are present (polyprotein), targets STAT2 for degradation. Interacts with serine protease NS3. Interacts with host SCRIB; this interaction targets NS5 to the cell membrane periphery and nucleus, thereby allowing efficient host nuclear STAT1 inhibition. Specific enzymatic cleavages in vivo yield mature proteins. Cleavages in the lumen of endoplasmic reticulum are performed by host signal peptidase, whereas cleavages in the cytoplasmic side are performed by serine protease NS3. Signal cleavage at the 2K-4B site requires a prior NS3 protease-mediated cleavage at the 4A-2K site. In terms of processing, cleaved in post-Golgi vesicles by a host furin, releasing the mature small envelope protein M, and peptide pr. This cleavage is incomplete as up to 30% of viral particles still carry uncleaved prM. Post-translationally, N-glycosylated. N-glycosylated. The excreted form is glycosylated and this is required for efficient secretion of the protein from infected cells. In terms of processing, acetylated by host KAT5. Acetylation modulates NS3 RNA-binding and unwinding activities and plays an important positive role for viral replication. Post-translationally, phosphorylated on serines residues. This phosphorylation may trigger NS5 nuclear localization.

It is found in the virion. It localises to the host nucleus. Its subcellular location is the host cytoplasm. The protein localises to the host perinuclear region. The protein resides in the secreted. It is found in the virion membrane. It localises to the host endoplasmic reticulum membrane. It carries out the reaction Selective hydrolysis of -Xaa-Xaa-|-Yaa- bonds in which each of the Xaa can be either Arg or Lys and Yaa can be either Ser or Ala.. The catalysed reaction is RNA(n) + a ribonucleoside 5'-triphosphate = RNA(n+1) + diphosphate. It catalyses the reaction a ribonucleoside 5'-triphosphate + H2O = a ribonucleoside 5'-diphosphate + phosphate + H(+). The enzyme catalyses ATP + H2O = ADP + phosphate + H(+). It carries out the reaction a 5'-end (5'-triphosphoguanosine)-ribonucleoside in mRNA + S-adenosyl-L-methionine = a 5'-end (N(7)-methyl 5'-triphosphoguanosine)-ribonucleoside in mRNA + S-adenosyl-L-homocysteine. The catalysed reaction is a 5'-end (N(7)-methyl 5'-triphosphoguanosine)-ribonucleoside in mRNA + S-adenosyl-L-methionine = a 5'-end (N(7)-methyl 5'-triphosphoguanosine)-(2'-O-methyl-ribonucleoside) in mRNA + S-adenosyl-L-homocysteine + H(+). Plays a role in virus budding by binding to the cell membrane and gathering the viral RNA into a nucleocapsid that forms the core of a mature virus particle. During virus entry, may induce genome penetration into the host cytoplasm after hemifusion induced by the surface proteins. Can migrate to the cell nucleus where it modulates host functions. Functionally, inhibits RNA silencing by interfering with host Dicer. In terms of biological role, prevents premature fusion activity of envelope proteins in trans-Golgi by binding to envelope protein E at pH6.0. After virion release in extracellular space, gets dissociated from E dimers. Its function is as follows. Acts as a chaperone for envelope protein E during intracellular virion assembly by masking and inactivating envelope protein E fusion peptide. prM is the only viral peptide matured by host furin in the trans-Golgi network probably to avoid catastrophic activation of the viral fusion activity in acidic Golgi compartment prior to virion release. prM-E cleavage is inefficient, and many virions are only partially matured. These uncleaved prM would play a role in immune evasion. May play a role in virus budding. Exerts cytotoxic effects by activating a mitochondrial apoptotic pathway through M ectodomain. May display a viroporin activity. Functionally, binds to host cell surface receptor and mediates fusion between viral and cellular membranes. Envelope protein is synthesized in the endoplasmic reticulum in the form of heterodimer with protein prM. They play a role in virion budding in the ER, and the newly formed immature particle is covered with 60 spikes composed of heterodimer between precursor prM and envelope protein E. The virion is transported to the Golgi apparatus where the low pH causes dissociation of PrM-E heterodimers and formation of E homodimers. prM-E cleavage is inefficient, and many virions are only partially matured. These uncleaved prM would play a role in immune evasion. In terms of biological role, involved in immune evasion, pathogenesis and viral replication. Once cleaved off the polyprotein, is targeted to three destinations: the viral replication cycle, the plasma membrane and the extracellular compartment. Essential for viral replication. Required for formation of the replication complex and recruitment of other non-structural proteins to the ER-derived membrane structures. Excreted as a hexameric lipoparticle that plays a role against host immune response. Antagonizing the complement function. Binds to the host macrophages and dendritic cells. Inhibits signal transduction originating from Toll-like receptor 3 (TLR3). Its function is as follows. Component of the viral RNA replication complex that functions in virion assembly and antagonizes the host immune response. Required cofactor for the serine protease function of NS3. May have membrane-destabilizing activity and form viroporins. Functionally, displays three enzymatic activities: serine protease, NTPase and RNA helicase. NS3 serine protease, in association with NS2B, performs its autocleavage and cleaves the polyprotein at dibasic sites in the cytoplasm: C-prM, NS2A-NS2B, NS2B-NS3, NS3-NS4A, NS4A-2K and NS4B-NS5. NS3 RNA helicase binds RNA and unwinds dsRNA in the 3' to 5' direction. In terms of biological role, regulates the ATPase activity of the NS3 helicase activity. NS4A allows NS3 helicase to conserve energy during unwinding. Its function is as follows. Functions as a signal peptide for NS4B and is required for the interferon antagonism activity of the latter. Induces the formation of ER-derived membrane vesicles where the viral replication takes place. Inhibits interferon (IFN)-induced host STAT1 phosphorylation and nuclear translocation, thereby preventing the establishment of cellular antiviral state by blocking the IFN-alpha/beta pathway. Inhibits STAT2 translocation in the nucleus after IFN-alpha treatment. Functionally, replicates the viral (+) and (-) genome, and performs the capping of genomes in the cytoplasm. NS5 methylates viral RNA cap at guanine N-7 and ribose 2'-O positions. Besides its role in genome replication, also prevents the establishment of cellular antiviral state by blocking the interferon-alpha/beta (IFN-alpha/beta) signaling pathway. Inhibits host TYK2 and STAT2 phosphorylation, thereby preventing activation of JAK-STAT signaling pathway. In Tick-borne encephalitis virus (strain Hypr) (TBEV), this protein is Genome polyprotein.